The following is a 194-amino-acid chain: tRNA(Phe) 7-((3-amino-3-carboxypropyl)-4-demethylwyosine(37)-N(4))-methyltransferase 1 (194 aa).

This sequence belongs to the TYW3 family.

It catalyses the reaction 4-demethyl-7-[(3S)-3-amino-3-carboxypropyl]wyosine(37) in tRNA(Phe) + S-adenosyl-L-methionine = 7-[(3S)-3-amino-3-carboxypropyl]wyosine(37) in tRNA(Phe) + S-adenosyl-L-homocysteine + H(+). In terms of biological role, S-adenosyl-L-methionine-dependent methyltransferase that acts as a component of the wyosine derivatives biosynthesis pathway. Probably methylates N-4 position of wybutosine-86 to produce wybutosine-72. In Pyrococcus abyssi (strain GE5 / Orsay), this protein is tRNA(Phe) 7-((3-amino-3-carboxypropyl)-4-demethylwyosine(37)-N(4))-methyltransferase 1.